We begin with the raw amino-acid sequence, 188 residues long: Acireductone dioxygenase (188 aa).

The Fe(2+) site is built by His97, His99, Glu103, and His141. Residues His97, His99, Glu103, and His141 each contribute to the Ni(2+) site.

This sequence belongs to the acireductone dioxygenase (ARD) family. Monomer. It depends on Fe(2+) as a cofactor. Ni(2+) serves as cofactor.

It catalyses the reaction 1,2-dihydroxy-5-(methylsulfanyl)pent-1-en-3-one + O2 = 3-(methylsulfanyl)propanoate + CO + formate + 2 H(+). The enzyme catalyses 1,2-dihydroxy-5-(methylsulfanyl)pent-1-en-3-one + O2 = 4-methylsulfanyl-2-oxobutanoate + formate + 2 H(+). It functions in the pathway amino-acid biosynthesis; L-methionine biosynthesis via salvage pathway; L-methionine from S-methyl-5-thio-alpha-D-ribose 1-phosphate: step 5/6. Catalyzes 2 different reactions between oxygen and the acireductone 1,2-dihydroxy-3-keto-5-methylthiopentene (DHK-MTPene) depending upon the metal bound in the active site. Fe-containing acireductone dioxygenase (Fe-ARD) produces formate and 2-keto-4-methylthiobutyrate (KMTB), the alpha-ketoacid precursor of methionine in the methionine recycle pathway. Ni-containing acireductone dioxygenase (Ni-ARD) produces methylthiopropionate, carbon monoxide and formate, and does not lie on the methionine recycle pathway. The sequence is that of Acireductone dioxygenase from Xanthomonas oryzae pv. oryzae (strain MAFF 311018).